We begin with the raw amino-acid sequence, 207 residues long: uncharacterized protein (207 aa).

Residues Arg80, Glu88, and Arg148 contribute to the active site.

This sequence belongs to the thermonuclease family.

This is an uncharacterized protein from Methanocaldococcus jannaschii (strain ATCC 43067 / DSM 2661 / JAL-1 / JCM 10045 / NBRC 100440) (Methanococcus jannaschii).